Consider the following 105-residue polypeptide: Small ribosomal subunit protein bS20 (105 aa).

Belongs to the bacterial ribosomal protein bS20 family.

Functionally, binds directly to 16S ribosomal RNA. This Moorella thermoacetica (strain ATCC 39073 / JCM 9320) protein is Small ribosomal subunit protein bS20.